Reading from the N-terminus, the 319-residue chain is Annexin A4 (319 aa).

Residue threonine 7 is modified to Phosphothreonine. At serine 12 the chain carries Phosphoserine. Annexin repeat units follow at residues 14-85, 86-157, 169-241, and 245-316; these read FNAT…GLMT, PTVL…SLSA, ALMK…AIVK, and SKPS…VLCG. Residues lysine 213, lysine 293, and lysine 300 each carry the N6-acetyllysine modification.

It belongs to the annexin family.

The protein localises to the zymogen granule membrane. Functionally, calcium/phospholipid-binding protein which promotes membrane fusion and is involved in exocytosis. The protein is Annexin A4 (Anxa4) of Mus musculus (Mouse).